Here is a 218-residue protein sequence, read N- to C-terminus: Small ribosomal subunit protein uS3c (218 aa).

A KH type-2 domain is found at 47–118 (VQKHMRISSG…RLNIAIARVA (72 aa)).

This sequence belongs to the universal ribosomal protein uS3 family. In terms of assembly, part of the 30S ribosomal subunit.

It is found in the plastid. It localises to the chloroplast. The sequence is that of Small ribosomal subunit protein uS3c (rps3) from Nymphaea alba (White water-lily).